Here is a 320-residue protein sequence, read N- to C-terminus: Cytochrome f (320 aa).

An N-terminal signal peptide occupies residues 1–35 (MENRNTFSWVKEQITRSISVSIMIYVITRTSISNA). Residues tyrosine 36, cysteine 56, cysteine 59, and histidine 60 each coordinate heme. Residues 286-305 (VQGLLFFFASVILAQVFLVL) form a helical membrane-spanning segment.

This sequence belongs to the cytochrome f family. In terms of assembly, the 4 large subunits of the cytochrome b6-f complex are cytochrome b6, subunit IV (17 kDa polypeptide, petD), cytochrome f and the Rieske protein, while the 4 small subunits are PetG, PetL, PetM and PetN. The complex functions as a dimer. The cofactor is heme.

It is found in the plastid. The protein resides in the chloroplast thylakoid membrane. Its function is as follows. Component of the cytochrome b6-f complex, which mediates electron transfer between photosystem II (PSII) and photosystem I (PSI), cyclic electron flow around PSI, and state transitions. This is Cytochrome f (petA) from Triticum aestivum (Wheat).